We begin with the raw amino-acid sequence, 231 residues long: Large ribosomal subunit protein uL1 (231 aa).

The protein belongs to the universal ribosomal protein uL1 family. Part of the 50S ribosomal subunit.

In terms of biological role, binds directly to 23S rRNA. The L1 stalk is quite mobile in the ribosome, and is involved in E site tRNA release. Its function is as follows. Protein L1 is also a translational repressor protein, it controls the translation of the L11 operon by binding to its mRNA. In Chlorobaculum tepidum (strain ATCC 49652 / DSM 12025 / NBRC 103806 / TLS) (Chlorobium tepidum), this protein is Large ribosomal subunit protein uL1.